Reading from the N-terminus, the 382-residue chain is Histidine biosynthesis bifunctional protein HisB (382 aa).

The interval 1–190 (MQKIVFIDRD…EIYEFLRLPA (190 aa)) is histidinol-phosphatase. Catalysis depends on Asp-8, which acts as the Nucleophile. 3 residues coordinate Mg(2+): Asp-8, Asp-10, and Asp-129. Asp-10 acts as the Proton donor in catalysis. The imidazoleglycerol-phosphate dehydratase stretch occupies residues 191-382 (RTALVERNTK…DNLPSTKGVL (192 aa)).

In the N-terminal section; belongs to the histidinol-phosphatase family. The protein in the C-terminal section; belongs to the imidazoleglycerol-phosphate dehydratase family. It depends on Mg(2+) as a cofactor.

The protein localises to the cytoplasm. It catalyses the reaction D-erythro-1-(imidazol-4-yl)glycerol 3-phosphate = 3-(imidazol-4-yl)-2-oxopropyl phosphate + H2O. It carries out the reaction L-histidinol phosphate + H2O = L-histidinol + phosphate. It participates in amino-acid biosynthesis; L-histidine biosynthesis; L-histidine from 5-phospho-alpha-D-ribose 1-diphosphate: step 6/9. The protein operates within amino-acid biosynthesis; L-histidine biosynthesis; L-histidine from 5-phospho-alpha-D-ribose 1-diphosphate: step 8/9. This chain is Histidine biosynthesis bifunctional protein HisB, found in Spirosoma linguale (strain ATCC 33905 / DSM 74 / LMG 10896 / Claus 1).